Reading from the N-terminus, the 393-residue chain is Formate-dependent phosphoribosylglycinamide formyltransferase (393 aa).

Residues 22 to 23 (EL) and glutamate 82 contribute to the N(1)-(5-phospho-beta-D-ribosyl)glycinamide site. Residues arginine 114, lysine 155, 160-165 (SSGHGQ), 195-198 (EGFI), and glutamate 203 each bind ATP. One can recognise an ATP-grasp domain in the interval 119 to 308 (RLAAEELGLK…QFALHARAIL (190 aa)). Positions 267 and 279 each coordinate Mg(2+). N(1)-(5-phospho-beta-D-ribosyl)glycinamide contacts are provided by residues aspartate 286, lysine 356, and 363–364 (RR).

The protein belongs to the PurK/PurT family. As to quaternary structure, homodimer.

The catalysed reaction is N(1)-(5-phospho-beta-D-ribosyl)glycinamide + formate + ATP = N(2)-formyl-N(1)-(5-phospho-beta-D-ribosyl)glycinamide + ADP + phosphate + H(+). Its pathway is purine metabolism; IMP biosynthesis via de novo pathway; N(2)-formyl-N(1)-(5-phospho-D-ribosyl)glycinamide from N(1)-(5-phospho-D-ribosyl)glycinamide (formate route): step 1/1. Involved in the de novo purine biosynthesis. Catalyzes the transfer of formate to 5-phospho-ribosyl-glycinamide (GAR), producing 5-phospho-ribosyl-N-formylglycinamide (FGAR). Formate is provided by PurU via hydrolysis of 10-formyl-tetrahydrofolate. This chain is Formate-dependent phosphoribosylglycinamide formyltransferase, found in Actinobacillus pleuropneumoniae serotype 3 (strain JL03).